We begin with the raw amino-acid sequence, 154 residues long: Aspartate carbamoyltransferase regulatory chain (154 aa).

C110, C115, C136, and C139 together coordinate Zn(2+).

It belongs to the PyrI family. In terms of assembly, contains catalytic and regulatory chains. Zn(2+) serves as cofactor.

In terms of biological role, involved in allosteric regulation of aspartate carbamoyltransferase. The chain is Aspartate carbamoyltransferase regulatory chain from Halobacterium salinarum (strain ATCC 700922 / JCM 11081 / NRC-1) (Halobacterium halobium).